The chain runs to 152 residues: Nucleoside diphosphate kinase B (152 aa).

Positions 1 to 66 are interaction with AKAP13; the sequence is MANLERTFIA…DRPFFPGLVK (66 aa). K12, F60, R88, T94, R105, and N115 together coordinate ATP. The active-site Pros-phosphohistidine intermediate is the H118.

The protein belongs to the NDK family. In terms of assembly, hexamer of two different chains: An and B (A6, A5B, A4B2, A3B3, A2B4, AB5, B6). Interacts with CAPN8. Interacts with AKAP13. Interacts with ITGB1BP1 (via C-terminal domain region). Interacts with BCL2L10. It depends on Mg(2+) as a cofactor. In terms of tissue distribution, ubiquitously expressed.

Its subcellular location is the cytoplasm. It is found in the cell projection. The protein resides in the lamellipodium. It localises to the ruffle. The protein localises to the perinuclear region. Its subcellular location is the nucleus. The enzyme catalyses a 2'-deoxyribonucleoside 5'-diphosphate + ATP = a 2'-deoxyribonucleoside 5'-triphosphate + ADP. It catalyses the reaction a ribonucleoside 5'-diphosphate + ATP = a ribonucleoside 5'-triphosphate + ADP. It carries out the reaction ATP + protein L-histidine = ADP + protein N-phospho-L-histidine.. Functionally, major role in the synthesis of nucleoside triphosphates other than ATP. The ATP gamma phosphate is transferred to the NDP beta phosphate via a ping-pong mechanism, using a phosphorylated active-site intermediate. Negatively regulates Rho activity by interacting with AKAP13/LBC. Acts as a transcriptional activator of the MYC gene; binds DNA non-specifically. Binds to both single-stranded guanine- and cytosine-rich strands within the nuclease hypersensitive element (NHE) III(1) region of the MYC gene promoter. Does not bind to duplex NHE III(1). Has G-quadruplex (G4) DNA-binding activity, which is independent of its nucleotide-binding and kinase activity. Binds both folded and unfolded G4 with similar low nanomolar affinities. Stabilizes folded G4s regardless of whether they are prefolded or not. Exhibits histidine protein kinase activity. This Homo sapiens (Human) protein is Nucleoside diphosphate kinase B (NME2).